The chain runs to 160 residues: Transcriptional repressor NrdR (160 aa).

A zinc finger lies at 3–34; the sequence is CPYCQYEDTQVKDSRPAEEGAVIRRRRVCSVC. In terms of domain architecture, ATP-cone spans 49 to 139; sequence LLITKKNGRC…VYRDFRNASD (91 aa).

This sequence belongs to the NrdR family. Requires Zn(2+) as cofactor.

Its function is as follows. Negatively regulates transcription of bacterial ribonucleotide reductase nrd genes and operons by binding to NrdR-boxes. In Bartonella tribocorum (strain CIP 105476 / IBS 506), this protein is Transcriptional repressor NrdR.